Here is a 284-residue protein sequence, read N- to C-terminus: Pseudouridine-5'-phosphate glycosidase (284 aa).

Glu-17 acts as the Proton donor in catalysis. 2 residues coordinate substrate: Lys-77 and Val-97. A Mn(2+)-binding site is contributed by Asp-126. Substrate is bound at residue 128–130; that stretch reads SQD. Lys-147 (nucleophile) is an active-site residue.

It belongs to the pseudouridine-5'-phosphate glycosidase family. Homotrimer. The cofactor is Mn(2+).

The enzyme catalyses D-ribose 5-phosphate + uracil = psi-UMP + H2O. Its function is as follows. Catalyzes the reversible cleavage of pseudouridine 5'-phosphate (PsiMP) to ribose 5-phosphate and uracil. Functions biologically in the cleavage direction, as part of a pseudouridine degradation pathway. The polypeptide is Pseudouridine-5'-phosphate glycosidase (Thermotoga petrophila (strain ATCC BAA-488 / DSM 13995 / JCM 10881 / RKU-1)).